Reading from the N-terminus, the 419-residue chain is Phosphoglycerate kinase (419 aa).

Residues 42 to 44 (DLN), R58, 81 to 84 (HLGR), R135, and R168 each bind substrate. Residues K219, E341, and 367-370 (GGDT) each bind ATP.

It belongs to the phosphoglycerate kinase family. In terms of assembly, monomer.

The protein localises to the cytoplasm. The enzyme catalyses (2R)-3-phosphoglycerate + ATP = (2R)-3-phospho-glyceroyl phosphate + ADP. It participates in carbohydrate degradation; glycolysis; pyruvate from D-glyceraldehyde 3-phosphate: step 2/5. The protein is Phosphoglycerate kinase of Ralstonia nicotianae (strain ATCC BAA-1114 / GMI1000) (Ralstonia solanacearum).